Consider the following 386-residue polypeptide: Latent membrane protein 1 (386 aa).

At 1-23 (MEHDLERGPPGPRRPPRGPPLSS) the chain is on the cytoplasmic side. The chain crosses the membrane as a helical span at residues 24-44 (SLGLALLLLLLALLFWLYIVM). The Extracellular segment spans residues 45 to 51 (SDWTGGA). The helical transmembrane segment at 52-72 (LLVLYSFALMLIIIILIIFIF) threads the bilayer. Residues 73–75 (RRD) are Cytoplasmic-facing. A helical transmembrane segment spans residues 76–96 (LLCPLGALCILLLMITLLLIA). The Extracellular segment spans residues 97–106 (LWNLHGQALF). Residues 107-127 (LGIVLFIFGCLLVLGIWIYLL) form a helical membrane-spanning segment. Topologically, residues 128-139 (EMLWRLGATIWQ) are cytoplasmic. Residues 140–160 (LLAFFLAFFLDLILLIIALYL) form a helical membrane-spanning segment. The Extracellular portion of the chain corresponds to 161 to 163 (QQN). Residues 164–184 (WWTLLVDLLWLLLFLAILIWM) form a helical membrane-spanning segment. Residues 185–386 (YYHGQRHSDE…HGPVQLSYYD (202 aa)) are Cytoplasmic-facing. Positions 194 to 232 (EHHHDDSLPHPQQATDDSGHESDSNSNEGRHHLLVSGAG) are CTAR1. The disordered stretch occupies residues 194–386 (EHHHDDSLPH…HGPVQLSYYD (193 aa)). An Interaction with host TRAF proteins motif is present at residues 204–208 (PQQAT). The segment covering 210–224 (DSGHESDSNSNEGRH) has biased composition (basic and acidic residues). Low complexity predominate over residues 251–267 (NGPQDPDNTDDNGPQDP). The segment at 351 to 386 (GHGGGDPHLPTLLLGSSGSGGDDDDPHGPVQLSYYD) is CTAR2.

Belongs to the herpesviridae LMP-1 family. In terms of assembly, interacts (via PXQXT motif) with host tumor necrosis factor receptor-associated factor (TRAF) proteins TRAF1, TRAF2, TRAF3 and TRAF5. Interacts with human protein ZMYND11; leading to negatively regulate NF-kappa-B activation. Interacts with host UBE2I; this interaction induces the sumoylation of various cellular proteins. Interacts with host IRF7. Interacts with host TYK2. In terms of processing, ubiquitinated on the N-terminus.

The protein resides in the host cell membrane. Functionally, acts as a CD40 functional homolog to prevent apoptosis of infected B-lymphocytes and drive their proliferation. Functions as a constitutively active tumor necrosis factor receptor that induces the activation of several signaling pathways, including those of the NF-kappa-B family. LMP1 signaling leads to up-regulation of antiapoptotic proteins and provide growth signals in latently infected cells. Interacts with host UBE2I and subsequently affects the sumoylation state of several cellular proteins. For example, induces the sumoylation of host IRF7 thereby limiting its transcriptional activity and modulating the activation of innate immune responses. Also inhibits host IFN-alpha-stimulated STAT2 nuclear translocation and interferon-stimulated response element transcriptional activity by interacting with and inhibiting host TYK2. Induces SUMO expression during viral latency thereby dysregulating the host sumoylation processes. This chain is Latent membrane protein 1 (LMP1), found in Epstein-Barr virus (strain B95-8) (HHV-4).